The sequence spans 273 residues: Putative pyruvate, phosphate dikinase regulatory protein (273 aa).

Residue 153 to 160 coordinates ADP; that stretch reads GISRTSKT.

This sequence belongs to the pyruvate, phosphate/water dikinase regulatory protein family. PDRP subfamily.

The enzyme catalyses N(tele)-phospho-L-histidyl/L-threonyl-[pyruvate, phosphate dikinase] + ADP = N(tele)-phospho-L-histidyl/O-phospho-L-threonyl-[pyruvate, phosphate dikinase] + AMP + H(+). It catalyses the reaction N(tele)-phospho-L-histidyl/O-phospho-L-threonyl-[pyruvate, phosphate dikinase] + phosphate + H(+) = N(tele)-phospho-L-histidyl/L-threonyl-[pyruvate, phosphate dikinase] + diphosphate. Bifunctional serine/threonine kinase and phosphorylase involved in the regulation of the pyruvate, phosphate dikinase (PPDK) by catalyzing its phosphorylation/dephosphorylation. The chain is Putative pyruvate, phosphate dikinase regulatory protein from Rhizobium etli (strain CIAT 652).